The chain runs to 515 residues: Na(+)/H(+) antiporter NhaB (515 aa).

13 helical membrane passes run I23–G43, W44–Q64, I88–M108, L119–F139, F143–V163, L202–P222, F238–V258, G303–I323, G324–G344, L357–I377, L389–A409, A447–I467, and M477–L497.

It belongs to the NhaB Na(+)/H(+) (TC 2.A.34) antiporter family.

The protein localises to the cell inner membrane. The enzyme catalyses 2 Na(+)(in) + 3 H(+)(out) = 2 Na(+)(out) + 3 H(+)(in). In terms of biological role, na(+)/H(+) antiporter that extrudes sodium in exchange for external protons. The polypeptide is Na(+)/H(+) antiporter NhaB (Mannheimia succiniciproducens (strain KCTC 0769BP / MBEL55E)).